A 189-amino-acid chain; its full sequence is Dynactin subunit 6 (189 aa).

It belongs to the dynactin subunits 5/6 family. Dynactin subunit 6 subfamily. Subunit of dynactin, a multiprotein complex part of a tripartite complex with dynein and a adapter, such as BICDL1, BICD2 or HOOK3. The dynactin complex is built around ACTR1A/ACTB filament and consists of an actin-related filament composed of a shoulder domain, a pointed end and a barbed end.

The protein localises to the cytoplasm. It is found in the cytoskeleton. In terms of biological role, part of the dynactin complex that activates the molecular motor dynein for ultra-processive transport along microtubules. The protein is Dynactin subunit 6 (dynF) of Dictyostelium discoideum (Social amoeba).